Reading from the N-terminus, the 154-residue chain is Putative pre-16S rRNA nuclease (154 aa).

It belongs to the YqgF nuclease family.

It localises to the cytoplasm. Could be a nuclease involved in processing of the 5'-end of pre-16S rRNA. This is Putative pre-16S rRNA nuclease from Pelotomaculum thermopropionicum (strain DSM 13744 / JCM 10971 / SI).